The sequence spans 228 residues: Aspartyl protease inhibitor (228 aa).

The N-terminal stretch at 1 to 15 (MKLIELCVLCAIAFA) is a signal peptide. Residues 88–112 (KLKSRMSGKKEEKAAVTSTKDEDLP) show a composition bias toward basic and acidic residues. The segment at 88–119 (KLKSRMSGKKEEKAAVTSTKDEDLPKPPQKPS) is disordered. A disulfide bridge links Cys134 with Cys224.

The protein belongs to the protease inhibitor I33 family.

The protein localises to the secreted. Functionally, aspartyl protease inhibitor. The sequence is that of Aspartyl protease inhibitor from Trichostrongylus colubriformis (Black scour worm).